The sequence spans 171 residues: Small ribosomal subunit protein mS25 (171 aa).

Belongs to the mitochondrion-specific ribosomal protein mS25 family. In terms of assembly, component of the mitochondrial ribosome small subunit (28S) which comprises a 12S rRNA and about 30 distinct proteins.

Its subcellular location is the mitochondrion. The sequence is that of Small ribosomal subunit protein mS25 (Mrps25) from Mus musculus (Mouse).